Reading from the N-terminus, the 325-residue chain is uncharacterized protein (325 aa).

Y59 (proton donor) is an active-site residue. Residue H117 participates in substrate binding.

Belongs to the aldo/keto reductase family.

The protein localises to the cytoplasm. The protein resides in the nucleus. This is an uncharacterized protein from Schizosaccharomyces pombe (strain 972 / ATCC 24843) (Fission yeast).